The chain runs to 199 residues: Proteasome subunit beta type-2 (199 aa).

This sequence belongs to the peptidase T1B family. As to quaternary structure, the 26S proteasome consists of a 20S proteasome core and two 19S regulatory subunits. The 20S proteasome core is composed of 28 subunits that are arranged in four stacked rings, resulting in a barrel-shaped structure. The two end rings are each formed by seven alpha subunits, and the two central rings are each formed by seven beta subunits. The catalytic chamber with the active sites is on the inside of the barrel.

The protein resides in the cytoplasm. The protein localises to the nucleus. Its function is as follows. Non-catalytic component of the proteasome, a multicatalytic proteinase complex which is characterized by its ability to cleave peptides with Arg, Phe, Tyr, Leu, and Glu adjacent to the leaving group at neutral or slightly basic pH. The proteasome has an ATP-dependent proteolytic activity. The chain is Proteasome subunit beta type-2 (pbs-4) from Caenorhabditis elegans.